Reading from the N-terminus, the 514-residue chain is GMP synthase [glutamine-hydrolyzing] (514 aa).

The 191-residue stretch at 9–199 (MILVLDFGGQ…LFEVCQCTGD (191 aa)) folds into the Glutamine amidotransferase type-1 domain. Cys86 serves as the catalytic Nucleophile. Catalysis depends on residues His173 and Glu175. The 190-residue stretch at 200-389 (WSMENFIEIE…LGLSDEIVWR (190 aa)) folds into the GMPS ATP-PPase domain. Position 227–233 (227–233 (SGGVDSS)) interacts with ATP.

In terms of assembly, homodimer.

The catalysed reaction is XMP + L-glutamine + ATP + H2O = GMP + L-glutamate + AMP + diphosphate + 2 H(+). Its pathway is purine metabolism; GMP biosynthesis; GMP from XMP (L-Gln route): step 1/1. In terms of biological role, catalyzes the synthesis of GMP from XMP. The polypeptide is GMP synthase [glutamine-hydrolyzing] (Exiguobacterium sibiricum (strain DSM 17290 / CCUG 55495 / CIP 109462 / JCM 13490 / 255-15)).